A 640-amino-acid polypeptide reads, in one-letter code: Insulin-like growth factor 1 receptor (640 aa).

2 consecutive Fibronectin type-III domains span residues 5–101 and 107–200; these read VPRP…TMPA and IPGP…VQAK. The Extracellular portion of the chain corresponds to 14-208; it reads EVMQIANTTM…AKTTYENFIH (195 aa). N-linked (GlcNAc...) asparagine glycosylation is found at Asn20, Asn29, Asn37, Asn173, and Asn186. The helical transmembrane segment at 209 to 232 threads the bilayer; it reads LMIALPIAVLLIVGGLVIMLYVFH. The Cytoplasmic segment spans residues 233–640; it reads RKRNSSRLGN…ALPLPQSSTC (408 aa). The IRS1- and SHC1-binding motif lies at 250-253; it reads NPEY. A Phosphotyrosine modification is found at Tyr253. The Protein kinase domain maps to 272 to 547; that stretch reads ITMSRELGQG…SVKDEMEAGF (276 aa). Residues 278-286 and Lys306 each bind ATP; that span reads LGQGSFGMV. Asp408 acts as the Proton acceptor in catalysis. A phosphotyrosine; by autocatalysis mark is found at Tyr434, Tyr438, and Tyr439. Glycyl lysine isopeptide (Lys-Gly) (interchain with G-Cter in ubiquitin) cross-links involve residues Lys441 and Lys444. Position 551 is a phosphoserine; by GSK3-beta (Ser551). Ser555 carries the phosphoserine modification. The segment at 555-640 is disordered; sequence SEENKPPEPE…ALPLPQSSTC (86 aa). Over residues 563-572 the composition is skewed to acidic residues; it reads PEELDLEPEN. Over residues 573–589 the composition is skewed to low complexity; it reads MESVPLDPSASSASLPL. The segment covering 590–599 has biased composition (basic and acidic residues); that stretch reads PDRHSGHKAE.

The protein belongs to the protein kinase superfamily. Tyr protein kinase family. Insulin receptor subfamily. As to quaternary structure, tetramer of 2 alpha and 2 beta chains linked by disulfide bonds. The alpha chains contribute to the formation of the ligand-binding domain, while the beta chain carries the kinase domain. Interacts with PIK3R1 and with the PTB/PID domains of IRS1 and SHC1 in vitro when autophosphorylated on tyrosine residues. Forms a hybrid receptor with INSR, the hybrid is a tetramer consisting of 1 alpha chain and 1 beta chain of INSR and 1 alpha chain and 1 beta chain of IGF1R. Interacts with ARRB1 and ARRB2. Interacts with GRB10. Interacts with RACK1. Interacts with SOCS1, SOCS2 and SOCS3. Interacts with 14-3-3 proteins. Interacts with NMD2. Interacts with MAP3K5. Interacts with STAT3. Interacts (nascent precursor form) with ZFAND2B. Autophosphorylated on tyrosine residues in response to ligand binding. Autophosphorylation occurs in trans, i.e. one subunit of the dimeric receptor phosphorylates tyrosine residues on the other subunit. Autophosphorylation occurs in a sequential manner; Tyr-438 is predominantly phosphorylated first, followed by phosphorylation of Tyr-434 and Tyr-439. While every single phosphorylation increases kinase activity, all three tyrosine residues in the kinase activation loop (Tyr-438, Tyr-434 and Tyr-439) have to be phosphorylated for optimal activity. Can be autophosphorylated at additional tyrosine residues (in vitro). Autophosphorylated is followed by phosphorylation of juxtamembrane tyrosines and C-terminal serines. May also be phosphorylated at Tyr-434 and Tyr-439 by mTORC2. Phosphorylation of Tyr-253 is required for IRS1- and SHC1-binding. Phosphorylation of Ser-551 by GSK-3beta restrains kinase activity and promotes cell surface expression, it requires a priming phosphorylation at Ser-555. Dephosphorylated by PTPN1. In terms of processing, polyubiquitinated at Lys-441 and Lys-444 through both 'Lys-48' and 'Lys-29' linkages, promoting receptor endocytosis and subsequent degradation by the proteasome. Ubiquitination is facilitated by pre-existing phosphorylation. Post-translationally, sumoylated with SUMO1. Controlled by regulated intramembrane proteolysis (RIP). Undergoes metalloprotease-dependent constitutive ectodomain shedding to produce a membrane-anchored 52 kDa C-Terminal fragment which is further processed by presenilin gamma-secretase to yield an intracellular 50 kDa fragment.

Its subcellular location is the cell membrane. It catalyses the reaction L-tyrosyl-[protein] + ATP = O-phospho-L-tyrosyl-[protein] + ADP + H(+). Activated by autophosphorylation at Tyr-434, Tyr-438 and Tyr-439 on the kinase activation loop; phosphorylation at all three tyrosine residues is required for optimal kinase activity. Inhibited by MSC1609119A-1, BMS-754807, PQIP, benzimidazole pyridinone, isoquinolinedione, bis-azaindole, 3-cyanoquinoline, 2,4-bis-arylamino-1,3-pyrimidine, pyrrolopyrimidine, pyrrole-5-carboxaldehyde, picropodophyllin (PPP), tyrphostin derivatives. While most inhibitors bind to the ATP binding pocket, MSC1609119A-1 functions as allosteric inhibitor and binds close to the DFG motif and the activation loop. In terms of biological role, receptor tyrosine kinase which mediates actions of insulin-like growth factor 1 (IGF1). Binds IGF1 with high affinity and IGF2 and insulin (INS) with a lower affinity. The activated IGF1R is involved in cell growth and survival control. IGF1R is crucial for tumor transformation and survival of malignant cell. Ligand binding activates the receptor kinase, leading to receptor autophosphorylation, and tyrosines phosphorylation of multiple substrates, that function as signaling adapter proteins including, the insulin-receptor substrates (IRS1/2), Shc and 14-3-3 proteins. Phosphorylation of IRSs proteins lead to the activation of two main signaling pathways: the PI3K-AKT/PKB pathway and the Ras-MAPK pathway. The result of activating the MAPK pathway is increased cellular proliferation, whereas activating the PI3K pathway inhibits apoptosis and stimulates protein synthesis. Phosphorylated IRS1 can activate the 85 kDa regulatory subunit of PI3K (PIK3R1), leading to activation of several downstream substrates, including protein AKT/PKB. AKT phosphorylation, in turn, enhances protein synthesis through mTOR activation and triggers the antiapoptotic effects of IGFIR through phosphorylation and inactivation of BAD. In parallel to PI3K-driven signaling, recruitment of Grb2/SOS by phosphorylated IRS1 or Shc leads to recruitment of Ras and activation of the ras-MAPK pathway. In addition to these two main signaling pathways IGF1R signals also through the Janus kinase/signal transducer and activator of transcription pathway (JAK/STAT). Phosphorylation of JAK proteins can lead to phosphorylation/activation of signal transducers and activators of transcription (STAT) proteins. In particular activation of STAT3, may be essential for the transforming activity of IGF1R. The JAK/STAT pathway activates gene transcription and may be responsible for the transforming activity. JNK kinases can also be activated by the IGF1R. IGF1 exerts inhibiting activities on JNK activation via phosphorylation and inhibition of MAP3K5/ASK1, which is able to directly associate with the IGF1R. When present in a hybrid receptor with INSR, binds IGF1. The polypeptide is Insulin-like growth factor 1 receptor (IGF1R) (Bos taurus (Bovine)).